The primary structure comprises 327 residues: MKRLGSVQRKMPCVFVTEVKAEPSAKREHQPFKVLATETLSEKALDADVYNAVATEKVDGTCCYVTNYKGQPYLWARLDRKPNKQADKRFKKFLHSKESAKEFHWNTEEDFKPVPECWIPAKEIEKQNGKPVPDENGHIPGWVPVEKGSKQYCWHSSVVNYEFGIALVLRHHPDDPGVLEISAVPLSELLEQTLELIGTSINGNPYGLGSKKSPLHFLTPHGAFQVRNLPTLKHNDLLSWFEDCREGQIEGIVWHCGDGCLIKVHRHHLGLCWPLPDTYMNSKPVIINMNLNLNNYDCAFDNQSLFNQFSKIDKQKFERLKDIILDV.

Mg(2+) is required as a cofactor. Requires Mn(2+) as cofactor. AMPylates itself (auto-AMPylation).

It catalyses the reaction ATP + (ribonucleotide)n-3'-hydroxyl + 5'-phospho-(ribonucleotide)m = (ribonucleotide)n+m + AMP + diphosphate.. Functionally, functions as an RNA ligase, in vitro. The ligation reaction entails three nucleotidyl transfer steps. In the first step, the RNA ligase reacts with ATP in the absence of nucleic acid to form a covalent ligase-AMP intermediate and release pyrophosphate. In step 2, the ligase-AMP binds to the nucleic acid and transfers the adenylate to the 5'-PO4 terminus to form an adenylylated intermediate. In step 3, the RNA ligase directs the attack of the 3'-OH on the 5'-phosphoanhydride linkage, resulting in a repaired 3'-5' phosphodiester and release of AMP. Exhibits selectivity for single-stranded RNA substrates and may not have nick-sealing activity on double-stranded DNA-RNA hybrids. May play a role in maintaining RNA integrity under stress conditions, for example in response to reactive oxygen species (ROS). The polypeptide is RNA ligase 1 (Mus musculus (Mouse)).